The chain runs to 188 residues: V-type ATP synthase subunit E (188 aa).

The protein belongs to the V-ATPase E subunit family.

Produces ATP from ADP in the presence of a proton gradient across the membrane. This Thermus thermophilus (strain ATCC BAA-163 / DSM 7039 / HB27) protein is V-type ATP synthase subunit E.